The primary structure comprises 85 residues: Large ribosomal subunit protein eL34 (85 aa).

It belongs to the eukaryotic ribosomal protein eL34 family.

This is Large ribosomal subunit protein eL34 from Saccharolobus islandicus (strain Y.N.15.51 / Yellowstone #2) (Sulfolobus islandicus).